A 102-amino-acid chain; its full sequence is Cytochrome c3 (102 aa).

Heme c is bound by residues His-26, His-29, Cys-34, Cys-37, His-38, His-39, Cys-50, Cys-55, His-56, His-73, Cys-81, Cys-84, His-85, Cys-95, Cys-98, and His-99.

Heme is required as a cofactor.

The protein resides in the periplasm. Its function is as follows. Participates in sulfate respiration coupled with phosphorylation by transferring electrons from the enzyme dehydrogenase to ferredoxin. The chain is Cytochrome c3 from Desulfovibrio desulfuricans.